A 191-amino-acid polypeptide reads, in one-letter code: Holliday junction branch migration complex subunit RuvA (191 aa).

The domain I stretch occupies residues 1-64 (MIGRLSGVLL…EDAHILFGFG (64 aa)). The interval 65-137 (TNEERNVFKQ…LKGKLGADLG (73 aa)) is domain II. Residues 137-141 (GVAGA) are flexible linker. The domain III stretch occupies residues 142–191 (VATDATSDILNALLALGYSDKEAMLALKQVPAGTGVSDGIKLALKSLSKA).

Belongs to the RuvA family. As to quaternary structure, homotetramer. Forms an RuvA(8)-RuvB(12)-Holliday junction (HJ) complex. HJ DNA is sandwiched between 2 RuvA tetramers; dsDNA enters through RuvA and exits via RuvB. An RuvB hexamer assembles on each DNA strand where it exits the tetramer. Each RuvB hexamer is contacted by two RuvA subunits (via domain III) on 2 adjacent RuvB subunits; this complex drives branch migration. In the full resolvosome a probable DNA-RuvA(4)-RuvB(12)-RuvC(2) complex forms which resolves the HJ.

The protein resides in the cytoplasm. Functionally, the RuvA-RuvB-RuvC complex processes Holliday junction (HJ) DNA during genetic recombination and DNA repair, while the RuvA-RuvB complex plays an important role in the rescue of blocked DNA replication forks via replication fork reversal (RFR). RuvA specifically binds to HJ cruciform DNA, conferring on it an open structure. The RuvB hexamer acts as an ATP-dependent pump, pulling dsDNA into and through the RuvAB complex. HJ branch migration allows RuvC to scan DNA until it finds its consensus sequence, where it cleaves and resolves the cruciform DNA. In Janthinobacterium sp. (strain Marseille) (Minibacterium massiliensis), this protein is Holliday junction branch migration complex subunit RuvA.